A 153-amino-acid polypeptide reads, in one-letter code: UPF0251 protein CT0950 (153 aa).

This sequence belongs to the UPF0251 family.

In Chlorobaculum tepidum (strain ATCC 49652 / DSM 12025 / NBRC 103806 / TLS) (Chlorobium tepidum), this protein is UPF0251 protein CT0950.